A 589-amino-acid polypeptide reads, in one-letter code: Isocitrate dehydrogenase kinase/phosphatase (589 aa).

ATP-binding positions include 317-323 (AAGIKGM) and K338. D373 is an active-site residue.

The protein belongs to the AceK family.

It is found in the cytoplasm. It catalyses the reaction L-seryl-[isocitrate dehydrogenase] + ATP = O-phospho-L-seryl-[isocitrate dehydrogenase] + ADP + H(+). Its function is as follows. Bifunctional enzyme which can phosphorylate or dephosphorylate isocitrate dehydrogenase (IDH) on a specific serine residue. This is a regulatory mechanism which enables bacteria to bypass the Krebs cycle via the glyoxylate shunt in response to the source of carbon. When bacteria are grown on glucose, IDH is fully active and unphosphorylated, but when grown on acetate or ethanol, the activity of IDH declines drastically concomitant with its phosphorylation. The chain is Isocitrate dehydrogenase kinase/phosphatase from Colwellia psychrerythraea (strain 34H / ATCC BAA-681) (Vibrio psychroerythus).